The following is a 251-amino-acid chain: MRKPIIAGNWKMHKTLKEALQFVEEVKHEVPSNEQVDAVVCAPALFLAHLVEATKGTNVKIGAQNMHFEDQGAFTGEISPVALKDLGVEYVIIGHSERREMFAETDETVNKKVLAAFKHGLVPIVCCGETLEERESNRTNEVVRVQVEKALEGLTEEQVKQVVIAYEPIWAIGTGKSSTAEDANNVCGYIRQVIANKFSQEAANAVRIQYGGSVKPENIAAFLAEEHIDGALVGGASLQPQSFLQLVEAGK.

Substrate is bound at residue 9–11 (NWK). The active-site Electrophile is the histidine 95. Glutamate 167 acts as the Proton acceptor in catalysis. Substrate contacts are provided by residues glycine 173, serine 213, and 234–235 (GG). Serine 213 is modified (phosphoserine).

It belongs to the triosephosphate isomerase family. As to quaternary structure, homodimer.

Its subcellular location is the cytoplasm. The catalysed reaction is D-glyceraldehyde 3-phosphate = dihydroxyacetone phosphate. The protein operates within carbohydrate biosynthesis; gluconeogenesis. It participates in carbohydrate degradation; glycolysis; D-glyceraldehyde 3-phosphate from glycerone phosphate: step 1/1. Involved in the gluconeogenesis. Catalyzes stereospecifically the conversion of dihydroxyacetone phosphate (DHAP) to D-glyceraldehyde-3-phosphate (G3P). This Anoxybacillus flavithermus (strain DSM 21510 / WK1) protein is Triosephosphate isomerase.